The primary structure comprises 194 residues: PRELI domain containing protein 3B (194 aa).

Residues 1-172 (MKIWTSEHVF…VIHKLNAEIE (172 aa)) enclose the PRELI/MSF1 domain. A phosphoserine mark is found at Ser-46 and Ser-51.

It belongs to the slowmo family.

This is PRELI domain containing protein 3B (PRELID3B) from Homo sapiens (Human).